We begin with the raw amino-acid sequence, 394 residues long: Elongation factor Tu (394 aa).

Residues 10–204 form the tr-type G domain; it reads KPHLNVGTIG…TLDTYIEDPV (195 aa). Positions 19 to 26 are G1; sequence GHVDHGKT. Position 19–26 (19–26) interacts with GTP; the sequence is GHVDHGKT. Thr26 provides a ligand contact to Mg(2+). Residues 60–64 form a G2 region; that stretch reads GITIK. A G3 region spans residues 81-84; it reads DCPG. Residues 81-85 and 136-139 contribute to the GTP site; these read DCPGH and NKCD. The segment at 136–139 is G4; it reads NKCD. The interval 174-176 is G5; that stretch reads SAL.

It belongs to the TRAFAC class translation factor GTPase superfamily. Classic translation factor GTPase family. EF-Tu/EF-1A subfamily. As to quaternary structure, monomer.

The protein localises to the cytoplasm. The catalysed reaction is GTP + H2O = GDP + phosphate + H(+). In terms of biological role, GTP hydrolase that promotes the GTP-dependent binding of aminoacyl-tRNA to the A-site of ribosomes during protein biosynthesis. The chain is Elongation factor Tu from Onion yellows phytoplasma (strain OY-M).